The sequence spans 87 residues: UPF0248 protein TON_0940 (87 aa).

Belongs to the UPF0248 family.

The polypeptide is UPF0248 protein TON_0940 (Thermococcus onnurineus (strain NA1)).